The following is a 532-amino-acid chain: CTP synthase (532 aa).

The interval 1–269 (MNQASTRFIF…DTQILNHFNI (269 aa)) is amidoligase domain. S17 contacts CTP. UTP is bound at residue S17. ATP contacts are provided by residues 18–23 (SLGKGL) and D75. Residues D75 and E143 each contribute to the Mg(2+) site. Residues 150–152 (DIE), 190–195 (KTKPTQ), and K226 each bind CTP. Residues 190 to 195 (KTKPTQ) and K226 each bind UTP. One can recognise a Glutamine amidotransferase type-1 domain in the interval 294–532 (NVAIIGKYIK…FISFIKASLD (239 aa)). L-glutamine is bound at residue G355. C382 (nucleophile; for glutamine hydrolysis) is an active-site residue. L-glutamine is bound by residues 383–386 (MGMQ), E406, and R462. Catalysis depends on residues H509 and E511.

This sequence belongs to the CTP synthase family. As to quaternary structure, homotetramer.

The enzyme catalyses UTP + L-glutamine + ATP + H2O = CTP + L-glutamate + ADP + phosphate + 2 H(+). It carries out the reaction L-glutamine + H2O = L-glutamate + NH4(+). It catalyses the reaction UTP + NH4(+) + ATP = CTP + ADP + phosphate + 2 H(+). Its pathway is pyrimidine metabolism; CTP biosynthesis via de novo pathway; CTP from UDP: step 2/2. With respect to regulation, allosterically activated by GTP, when glutamine is the substrate; GTP has no effect on the reaction when ammonia is the substrate. The allosteric effector GTP functions by stabilizing the protein conformation that binds the tetrahedral intermediate(s) formed during glutamine hydrolysis. Inhibited by the product CTP, via allosteric rather than competitive inhibition. In terms of biological role, catalyzes the ATP-dependent amination of UTP to CTP with either L-glutamine or ammonia as the source of nitrogen. Regulates intracellular CTP levels through interactions with the four ribonucleotide triphosphates. This Ehrlichia chaffeensis (strain ATCC CRL-10679 / Arkansas) protein is CTP synthase.